Consider the following 248-residue polypeptide: Triosephosphate isomerase (248 aa).

Residue 9–11 (NWK) participates in substrate binding. The Electrophile role is filled by His-94. Glu-166 functions as the Proton acceptor in the catalytic mechanism. Residues Gly-172, Ser-212, and 233 to 234 (GG) each bind substrate.

Belongs to the triosephosphate isomerase family. Homodimer.

It localises to the cytoplasm. It catalyses the reaction D-glyceraldehyde 3-phosphate = dihydroxyacetone phosphate. Its pathway is carbohydrate biosynthesis; gluconeogenesis. It participates in carbohydrate degradation; glycolysis; D-glyceraldehyde 3-phosphate from glycerone phosphate: step 1/1. In terms of biological role, involved in the gluconeogenesis. Catalyzes stereospecifically the conversion of dihydroxyacetone phosphate (DHAP) to D-glyceraldehyde-3-phosphate (G3P). This chain is Triosephosphate isomerase, found in Caldanaerobacter subterraneus subsp. tengcongensis (strain DSM 15242 / JCM 11007 / NBRC 100824 / MB4) (Thermoanaerobacter tengcongensis).